A 550-amino-acid polypeptide reads, in one-letter code: MTPADLATLIKETAVEVLTSRELDTSVLPEQVVVERPRNPEHGDYATNIALQVAKKVGQNPRDLATWLAEALAADDAIDSAEIAGPGFLNIRLAAAAQGEIVAKILAQGETFGNSDHLSHLDVNLEFVSANPTGPIHLGGTRWAAVGDSLGRVLEASGAKVTREYYFNDHGRQIDRFALSLLAAAKGEPTPEDGYGGEYIKEIAEAIVEKHPEALALEPAATQELFRAEGVEMMFEHIKSSLHEFGTDFDVYYHENSLFESGAVDKAVQVLKDNGNLYENEGAWWLRSTEFGDDKDRVVIKSDGDAAYIAGDIAYVADKFSRGHNLNIYMLGADHHGYIARLKAAAAALGYKPEGVEVLIGQMVNLLRDGKAVRMSKRAGTVVTLDDLVEAIGIDAARYSLIRSSVDSSLDIDLGLWESQSSDNPVYYVQYGHARLCSIARKAETLGVTEEGADLSLLTHDREGDLIRTLGEFPAVVKAAADLREPHRIARYAEELAGTFHRFYDSCHILPKADEDTAPIHSARLALAAATRQTLANALHLVGVSAPEKM.

A 'HIGH' region motif is present at residues 130–140; it reads ANPTGPIHLGG.

The protein belongs to the class-I aminoacyl-tRNA synthetase family. In terms of assembly, monomer.

It is found in the cytoplasm. It catalyses the reaction tRNA(Arg) + L-arginine + ATP = L-arginyl-tRNA(Arg) + AMP + diphosphate. The polypeptide is Arginine--tRNA ligase (Corynebacterium glutamicum (strain R)).